Here is a 218-residue protein sequence, read N- to C-terminus: MAGYRADDEYDYLFKLVLIGDSGVGKSNLLSRFTKNEFNLESKSTIGVEFATKSLNIDNKVIKAQIWDTAGQERYRAITSAYYRGAVGALLVYDVTRHVTYENVTRWLKELRDHTDPNIVVMLIGNKSDLRHLVAVSTDEAKGLAEREGLYFMETSALEATNVENAFTEALTQIYRIVSKKAVEAGDEGATSSAPPKGETINIKDEGSSWKKFGCCSS.

GTP is bound at residue 20-27 (GDSGVGKS). The short motif at 42–50 (SKSTIGVEF) is the Effector region element. Residues 68–72 (DTAGQ) and 126–129 (NKSD) contribute to the GTP site. The tract at residues 186-205 (GDEGATSSAPPKGETINIKD) is disordered. S-geranylgeranyl cysteine attachment occurs at residues Cys215 and Cys216.

It belongs to the small GTPase superfamily. Rab family. In terms of tissue distribution, its expression is weak in leaves, higher in stems and roots, but highest in petals, stigma and stamens.

The protein resides in the cell membrane. Its function is as follows. Protein transport. Probably involved in vesicular traffic. The protein is Ras-related protein YPT3 (YPT3) of Nicotiana plumbaginifolia (Leadwort-leaved tobacco).